A 337-amino-acid chain; its full sequence is Cysteine proteinase 3 (337 aa).

An N-terminal signal peptide occupies residues 1–21; the sequence is MRLSITLIFTLIVLSISFISA. Positions 22–120 are cleaved as a propeptide — activation peptide; that stretch reads GNVFSHKQYQ…GLRLNRPQFK (99 aa). 3 cysteine pairs are disulfide-bonded: cysteine 142–cysteine 185, cysteine 176–cysteine 219, and cysteine 277–cysteine 326. Cysteine 145 is a catalytic residue. Active-site residues include histidine 284 and asparagine 304.

This sequence belongs to the peptidase C1 family.

It is found in the lysosome. The protein is Cysteine proteinase 3 (cprC) of Dictyostelium discoideum (Social amoeba).